A 250-amino-acid polypeptide reads, in one-letter code: 5'-nucleotidase SurE (250 aa).

Residues D8, D9, S39, and N95 each contribute to the a divalent metal cation site.

This sequence belongs to the SurE nucleotidase family. Requires a divalent metal cation as cofactor.

Its subcellular location is the cytoplasm. It carries out the reaction a ribonucleoside 5'-phosphate + H2O = a ribonucleoside + phosphate. Nucleotidase that shows phosphatase activity on nucleoside 5'-monophosphates. The polypeptide is 5'-nucleotidase SurE (Cupriavidus pinatubonensis (strain JMP 134 / LMG 1197) (Cupriavidus necator (strain JMP 134))).